The primary structure comprises 140 residues: 3-hydroxyacyl-[acyl-carrier-protein] dehydratase FabZ (140 aa).

Residue His47 is part of the active site.

It belongs to the thioester dehydratase family. FabZ subfamily.

It localises to the cytoplasm. The enzyme catalyses a (3R)-hydroxyacyl-[ACP] = a (2E)-enoyl-[ACP] + H2O. Involved in unsaturated fatty acids biosynthesis. Catalyzes the dehydration of short chain beta-hydroxyacyl-ACPs and long chain saturated and unsaturated beta-hydroxyacyl-ACPs. The polypeptide is 3-hydroxyacyl-[acyl-carrier-protein] dehydratase FabZ (Streptococcus equi subsp. equi (strain 4047)).